The primary structure comprises 184 residues: Ribosome-recycling factor (184 aa).

The tract at residues 133 to 153 (DSNDELKKQQKNSDITEDDLR) is disordered.

The protein belongs to the RRF family.

The protein resides in the cytoplasm. Responsible for the release of ribosomes from messenger RNA at the termination of protein biosynthesis. May increase the efficiency of translation by recycling ribosomes from one round of translation to another. In Staphylococcus saprophyticus subsp. saprophyticus (strain ATCC 15305 / DSM 20229 / NCIMB 8711 / NCTC 7292 / S-41), this protein is Ribosome-recycling factor.